The primary structure comprises 426 residues: MGRVLVTIFVLFWPIGSFAAINLDRIVAVVNEDIVLESELEQMVRTVQDQLAAQGTSLPPGYVLERQVLERLVMEQLQLQLAARTGIQVGDETLNEALGRIAQDNGLTLSQFRNVLEQDGYDFPAFRENIRKELIISQLHKREVNDRVSVSKAEIDNFLTNQKKRGNQDAQYHLAHILITVPEAASPEQVQAAKAKAEQVLQQLREGADFQKVAVTYSDGQQALEGGDLGWRKMGQLPTLFVDVVPQLQAGDISKLIRSPSGFHIVKLLDYRGEGQQQLVTQTQARHILLRADELASEREVQLRLSQLRQRILSGDDFSELAQAHSDDKASALKGGDLGWVSPGQMIPRFEEAMRSLEPGEISEPFKTQFGWHVVQVLDRRQENMTEEFNRNRAKMEIRQRKVEEELENWLRQLRDEAYVEYRLDN.

A signal peptide spans 1-19 (MGRVLVTIFVLFWPIGSFA). PpiC domains are found at residues 169-270 (DAQY…KLLD) and 280-379 (VTQT…QVLD).

Its subcellular location is the periplasm. It carries out the reaction [protein]-peptidylproline (omega=180) = [protein]-peptidylproline (omega=0). In terms of biological role, chaperone involved in the correct folding and assembly of outer membrane proteins. Recognizes specific patterns of aromatic residues and the orientation of their side chains, which are found more frequently in integral outer membrane proteins. May act in both early periplasmic and late outer membrane-associated steps of protein maturation. In Nitrosococcus oceani (strain ATCC 19707 / BCRC 17464 / JCM 30415 / NCIMB 11848 / C-107), this protein is Chaperone SurA.